The chain runs to 295 residues: Acetylglutamate kinase (295 aa).

Substrate-binding positions include 66–67 (GG), R88, and N193.

This sequence belongs to the acetylglutamate kinase family. ArgB subfamily.

It is found in the cytoplasm. It catalyses the reaction N-acetyl-L-glutamate + ATP = N-acetyl-L-glutamyl 5-phosphate + ADP. It functions in the pathway amino-acid biosynthesis; L-arginine biosynthesis; N(2)-acetyl-L-ornithine from L-glutamate: step 2/4. Catalyzes the ATP-dependent phosphorylation of N-acetyl-L-glutamate. The polypeptide is Acetylglutamate kinase (Sinorhizobium medicae (strain WSM419) (Ensifer medicae)).